The chain runs to 940 residues: Alanine--tRNA ligase (940 aa).

Residues H581, H585, C683, and H687 each coordinate Zn(2+).

Belongs to the class-II aminoacyl-tRNA synthetase family. Zn(2+) is required as a cofactor.

It is found in the cytoplasm. The catalysed reaction is tRNA(Ala) + L-alanine + ATP = L-alanyl-tRNA(Ala) + AMP + diphosphate. Its function is as follows. Catalyzes the attachment of alanine to tRNA(Ala) in a two-step reaction: alanine is first activated by ATP to form Ala-AMP and then transferred to the acceptor end of tRNA(Ala). Also edits incorrectly charged Ser-tRNA(Ala) and Gly-tRNA(Ala) via its editing domain. This Leptospira borgpetersenii serovar Hardjo-bovis (strain L550) protein is Alanine--tRNA ligase.